The sequence spans 769 residues: Portal protein (769 aa).

The putative leucine zipper motif stretch occupies residues 458 to 479; the sequence is LEGYVNNLFKTIEGLKDVNSDL. Disordered regions lie at residues 654–675 and 750–769; these read RGPR…DDER and RQLT…DRRS. Residues 760-769 show a composition bias toward basic and acidic residues; that stretch reads VGCERRDRRS.

This sequence belongs to the herpesviridae portal protein family. As to quaternary structure, homododecamerizes. Interacts with terminase subunits TRM1 and TRM3.

The protein localises to the virion. It is found in the host nucleus. Functionally, forms a portal in the viral capsid through which viral DNA is translocated during DNA packaging. Assembles as a dodecamer at a single fivefold axe of the T=16 icosahedric capsid. Binds to the molecular motor that translocates the viral DNA, termed terminase. This chain is Portal protein (54), found in Homo sapiens (Human).